Reading from the N-terminus, the 55-residue chain is Large ribosomal subunit protein bL33 (55 aa).

This sequence belongs to the bacterial ribosomal protein bL33 family.

This Renibacterium salmoninarum (strain ATCC 33209 / DSM 20767 / JCM 11484 / NBRC 15589 / NCIMB 2235) protein is Large ribosomal subunit protein bL33.